Consider the following 263-residue polypeptide: 5'-nucleotidase SurE (263 aa).

Positions 8, 9, 40, and 93 each coordinate a divalent metal cation.

The protein belongs to the SurE nucleotidase family. A divalent metal cation serves as cofactor.

The protein localises to the cytoplasm. The catalysed reaction is a ribonucleoside 5'-phosphate + H2O = a ribonucleoside + phosphate. In terms of biological role, nucleotidase that shows phosphatase activity on nucleoside 5'-monophosphates. The polypeptide is 5'-nucleotidase SurE (Beijerinckia indica subsp. indica (strain ATCC 9039 / DSM 1715 / NCIMB 8712)).